The primary structure comprises 146 residues: UPF0178 protein BC_3040 (146 aa).

This sequence belongs to the UPF0178 family.

The sequence is that of UPF0178 protein BC_3040 from Bacillus cereus (strain ATCC 14579 / DSM 31 / CCUG 7414 / JCM 2152 / NBRC 15305 / NCIMB 9373 / NCTC 2599 / NRRL B-3711).